Reading from the N-terminus, the 70-residue chain is Melittin (70 aa).

Residues 1 to 21 (MKFLVNVALVFMVVYISFIYA) form the signal peptide. The propeptide at 22 to 43 (APEPEPAPEAEAEADAEADPEA) is removed by a dipeptidylpeptidase. Gly44 is subject to N-formylglycine; partial. Gln69 is modified (glutamine amide).

It belongs to the melittin family. Monomer (in solution and for integration into membranes), homotetramer (in solution and potentially as a toroidal pore in membranes), and potenially homomultimer (as a toroidal pore in membranes). In terms of tissue distribution, expressed by the venom gland.

Its subcellular location is the secreted. It is found in the target cell membrane. In terms of biological role, main toxin of bee venom with strong hemolytic activity and antimicrobial activity. It has enhancing effects on bee venom phospholipase A2 activity. This amphipathic toxin binds to negatively charged membrane surface and forms pore by inserting into lipid bilayers inducing the leakage of ions and molecules and the enhancement of permeability that ultimately leads to cell lysis. It acts as a voltage-gated pore with higher selectivity for anions over cations. The ion conductance has been shown to be voltage-dependent. Self-association of melittin in membranes is promoted by high ionic strength, but not by the presence of negatively charged lipids. In vivo, intradermal injection into healthy human volunteers produce sharp pain sensation and an inflammatory response. It produces pain by activating primary nociceptor cells directly and indirectly due to its ability to activate plasma membrane phospholipase A2 and its pore-forming activity. This is Melittin (MELT) from Apis cerana cerana (Oriental honeybee).